The following is an 88-amino-acid chain: Small ribosomal subunit protein uS17 (88 aa).

The protein belongs to the universal ribosomal protein uS17 family. In terms of assembly, part of the 30S ribosomal subunit.

Functionally, one of the primary rRNA binding proteins, it binds specifically to the 5'-end of 16S ribosomal RNA. The sequence is that of Small ribosomal subunit protein uS17 from Ligilactobacillus salivarius (strain UCC118) (Lactobacillus salivarius).